A 488-amino-acid polypeptide reads, in one-letter code: 3-octaprenyl-4-hydroxybenzoate carboxy-lyase (488 aa).

Asn172 is a Mn(2+) binding site. Residues 175–177, 189–191, and 194–195 contribute to the prenylated FMN site; these read IYR, RWL, and RG. Glu238 serves as a coordination point for Mn(2+). The Proton donor role is filled by Asp287.

The protein belongs to the UbiD family. As to quaternary structure, homohexamer. Requires prenylated FMN as cofactor. Mn(2+) serves as cofactor.

It localises to the cell membrane. The catalysed reaction is a 4-hydroxy-3-(all-trans-polyprenyl)benzoate + H(+) = a 2-(all-trans-polyprenyl)phenol + CO2. It functions in the pathway cofactor biosynthesis; ubiquinone biosynthesis. Its function is as follows. Catalyzes the decarboxylation of 3-octaprenyl-4-hydroxy benzoate to 2-octaprenylphenol, an intermediate step in ubiquinone biosynthesis. The protein is 3-octaprenyl-4-hydroxybenzoate carboxy-lyase of Pseudomonas aeruginosa (strain LESB58).